The following is a 249-amino-acid chain: Exosome complex component Rrp41 (249 aa).

This sequence belongs to the RNase PH family. Rrp41 subfamily. Component of the archaeal exosome complex. Forms a hexameric ring-like arrangement composed of 3 Rrp41-Rrp42 heterodimers. The hexameric ring associates with a trimer of Rrp4 and/or Csl4 subunits.

The protein resides in the cytoplasm. Functionally, catalytic component of the exosome, which is a complex involved in RNA degradation. Has 3'-&gt;5' exoribonuclease activity. Can also synthesize heteromeric RNA-tails. The polypeptide is Exosome complex component Rrp41 (Thermococcus onnurineus (strain NA1)).